The following is a 348-amino-acid chain: MLNIIRLLAESLPRISDGNENTDVWVNDMKFKMAYSFLNDDIDVIERELEQTVRSDYPLLSEAGLHLLQAGGKRIRPVFVLLSGMFGDYDINKIKYVAVTLEMIHMASLVHDDVIDDAELRRGKPTIKAKWDNRIAMYTGDYMLAGSLEMMTRINEPKAHRILSQTIVEVCLGEIEQIKDKYNMEQNLRTYLRRIKRKTALLIAVSCQLGAIASGADEKIHKALYWFGYYVGMSYQIIDDILDFTSTEEELGKPVGGDLLQGNVTLPVLYALKNPALKNQLKLINSETTQEQLEPIIEEIKKTDAIEASMAVSEMYLQKAFQKLNTLPRGRARSSLAAIAKYIGKRKF.

Residues K73, R76, and H105 each contribute to the isopentenyl diphosphate site. 2 residues coordinate Mg(2+): D112 and D116. Residue R121 participates in all-trans-hexaprenyl diphosphate binding. R122 serves as a coordination point for isopentenyl diphosphate. All-trans-hexaprenyl diphosphate contacts are provided by K198, T199, and Q236.

Belongs to the FPP/GGPP synthase family. In terms of assembly, heterodimer of component I and II. Requires Mg(2+) as cofactor.

It catalyses the reaction 4 isopentenyl diphosphate + (2E,6E)-farnesyl diphosphate = all-trans-heptaprenyl diphosphate + 4 diphosphate. Its function is as follows. Supplies heptaprenyl diphosphate, the precursor for the side chain of the isoprenoid quinone menaquinone-7 (MQ-7). The protein is Heptaprenyl diphosphate synthase component 2 (hepT) of Bacillus subtilis (strain 168).